The primary structure comprises 179 residues: Segregation and condensation protein B (179 aa).

This sequence belongs to the ScpB family. In terms of assembly, homodimer. Homodimerization may be required to stabilize the binding of ScpA to the Smc head domains. Component of a cohesin-like complex composed of ScpA, ScpB and the Smc homodimer, in which ScpA and ScpB bind to the head domain of Smc. The presence of the three proteins is required for the association of the complex with DNA.

The protein resides in the cytoplasm. Functionally, participates in chromosomal partition during cell division. May act via the formation of a condensin-like complex containing Smc and ScpA that pull DNA away from mid-cell into both cell halves. The protein is Segregation and condensation protein B of Streptococcus equi subsp. equi (strain 4047).